A 333-amino-acid chain; its full sequence is MTTTTERPDAPIRHDWTVAEIQAIYDLPLLDLVHRASLVHRAHHDPADIQRASLLSIKTGGCPEDCAYCPQSAHHKEAGIGRQRLMPVEAVLREAEAAKAAGATRFCMGAAWRQPKDGPEFDAVLAMVRGVRGLGMEACVTLGMLTPSQAERLAEAGLTAYNHNLDTGPDFYGDIISTRTYADRLNTLQAVRDAGIGVCCGGIIGMGEGVADRAAMLQVLANHAPHPESVPINALVAVAGTPLAERPPVDPLDLVRMCATARIVMPKARVRLSAGRRALTREAQVLCFLAGANSIFYGERLLTTANNEADADAQLLRDIGVPVPGIEVLEAAE.

Positions 47–276 (ADIQRASLLS…KARVRLSAGR (230 aa)) constitute a Radical SAM core domain. Cysteine 62, cysteine 66, and cysteine 69 together coordinate [4Fe-4S] cluster. [2Fe-2S] cluster-binding residues include cysteine 107, cysteine 139, cysteine 199, and arginine 271.

The protein belongs to the radical SAM superfamily. Biotin synthase family. Homodimer. Requires [4Fe-4S] cluster as cofactor. The cofactor is [2Fe-2S] cluster.

The enzyme catalyses (4R,5S)-dethiobiotin + (sulfur carrier)-SH + 2 reduced [2Fe-2S]-[ferredoxin] + 2 S-adenosyl-L-methionine = (sulfur carrier)-H + biotin + 2 5'-deoxyadenosine + 2 L-methionine + 2 oxidized [2Fe-2S]-[ferredoxin]. Its pathway is cofactor biosynthesis; biotin biosynthesis; biotin from 7,8-diaminononanoate: step 2/2. In terms of biological role, catalyzes the conversion of dethiobiotin (DTB) to biotin by the insertion of a sulfur atom into dethiobiotin via a radical-based mechanism. This is Biotin synthase from Methylobacterium nodulans (strain LMG 21967 / CNCM I-2342 / ORS 2060).